Reading from the N-terminus, the 401-residue chain is L-rhamnonate dehydratase (401 aa).

Substrate-binding residues include histidine 29 and arginine 55. Residues aspartate 222, glutamate 248, and glutamate 276 each contribute to the Mg(2+) site. The Proton acceptor role is filled by histidine 325. Glutamate 345 serves as a coordination point for substrate.

The protein belongs to the mandelate racemase/muconate lactonizing enzyme family. RhamD subfamily. Homooctamer; tetramer of dimers. The cofactor is Mg(2+).

The enzyme catalyses L-rhamnonate = 2-dehydro-3-deoxy-L-rhamnonate + H2O. Catalyzes the dehydration of L-rhamnonate to 2-keto-3-deoxy-L-rhamnonate (KDR). The chain is L-rhamnonate dehydratase from Klebsiella pneumoniae subsp. pneumoniae (strain ATCC 700721 / MGH 78578).